We begin with the raw amino-acid sequence, 200 residues long: Large ribosomal subunit protein uL4 (200 aa).

Residues 42–65 form a disordered region; sequence TRAHKSRADVSGGGKKPFRQKGTG.

This sequence belongs to the universal ribosomal protein uL4 family. In terms of assembly, part of the 50S ribosomal subunit.

Functionally, one of the primary rRNA binding proteins, this protein initially binds near the 5'-end of the 23S rRNA. It is important during the early stages of 50S assembly. It makes multiple contacts with different domains of the 23S rRNA in the assembled 50S subunit and ribosome. Its function is as follows. Forms part of the polypeptide exit tunnel. This Acinetobacter baumannii (strain AB307-0294) protein is Large ribosomal subunit protein uL4.